A 420-amino-acid polypeptide reads, in one-letter code: Gamma-glutamyl phosphate reductase (420 aa).

This sequence belongs to the gamma-glutamyl phosphate reductase family.

The protein localises to the cytoplasm. The catalysed reaction is L-glutamate 5-semialdehyde + phosphate + NADP(+) = L-glutamyl 5-phosphate + NADPH + H(+). It participates in amino-acid biosynthesis; L-proline biosynthesis; L-glutamate 5-semialdehyde from L-glutamate: step 2/2. Functionally, catalyzes the NADPH-dependent reduction of L-glutamate 5-phosphate into L-glutamate 5-semialdehyde and phosphate. The product spontaneously undergoes cyclization to form 1-pyrroline-5-carboxylate. This Neisseria meningitidis serogroup C (strain 053442) protein is Gamma-glutamyl phosphate reductase.